The following is a 551-amino-acid chain: Membrane protein insertase YidC (551 aa).

Residues 3 to 23 form a helical membrane-spanning segment; that stretch reads ANHIRILLLVTIAIMFISLMG. A compositionally biased stretch (polar residues) spans 33–47; that stretch reads NTKQQTSATQNNSHY. The disordered stretch occupies residues 33–59; sequence NTKQQTSATQNNSHYDNADSSTNTDVT. Over residues 50 to 59 the composition is skewed to low complexity; sequence ADSSTNTDVT. The next 3 membrane-spanning stretches (helical) occupy residues 361-381, 431-451, and 504-524; these read LVGN…LIFY, LSGC…YWVL, and VMMF…SGLV.

The protein belongs to the OXA1/ALB3/YidC family. Type 1 subfamily. Interacts with the Sec translocase complex via SecD. Specifically interacts with transmembrane segments of nascent integral membrane proteins during membrane integration.

It localises to the cell inner membrane. In terms of biological role, required for the insertion and/or proper folding and/or complex formation of integral membrane proteins into the membrane. Involved in integration of membrane proteins that insert both dependently and independently of the Sec translocase complex, as well as at least some lipoproteins. Aids folding of multispanning membrane proteins. This is Membrane protein insertase YidC from Francisella tularensis subsp. mediasiatica (strain FSC147).